Consider the following 123-residue polypeptide: Putative iron-sulfur cluster insertion protein ErpA (123 aa).

Iron-sulfur cluster contacts are provided by Cys-51, Cys-115, and Cys-117.

Belongs to the HesB/IscA family. Homodimer. Iron-sulfur cluster is required as a cofactor.

Its function is as follows. Required for insertion of 4Fe-4S clusters. In Burkholderia ambifaria (strain ATCC BAA-244 / DSM 16087 / CCUG 44356 / LMG 19182 / AMMD) (Burkholderia cepacia (strain AMMD)), this protein is Putative iron-sulfur cluster insertion protein ErpA.